The chain runs to 100 residues: NADH-quinone oxidoreductase subunit K (100 aa).

Helical transmembrane passes span 4-24 (LSHG…GMII), 28-48 (LLFM…AFVV), and 60-80 (VMYI…LALL).

This sequence belongs to the complex I subunit 4L family. NDH-1 is composed of 13 different subunits. Subunits NuoA, H, J, K, L, M, N constitute the membrane sector of the complex.

Its subcellular location is the cell inner membrane. The enzyme catalyses a quinone + NADH + 5 H(+)(in) = a quinol + NAD(+) + 4 H(+)(out). Its function is as follows. NDH-1 shuttles electrons from NADH, via FMN and iron-sulfur (Fe-S) centers, to quinones in the respiratory chain. The immediate electron acceptor for the enzyme in this species is believed to be ubiquinone. Couples the redox reaction to proton translocation (for every two electrons transferred, four hydrogen ions are translocated across the cytoplasmic membrane), and thus conserves the redox energy in a proton gradient. This Sodalis glossinidius (strain morsitans) protein is NADH-quinone oxidoreductase subunit K.